The sequence spans 436 residues: Probable transporter MCH1 (436 aa).

Transmembrane regions (helical) follow at residues 27 to 47 (VVAFLISLLSCLVAGSILLFT), 66 to 86 (MISSLSALGMYFCLPVLGYLA), 93 to 113 (LLSLFSIWFFCPSYFVNSYLV), 119 to 139 (SVIGFCVCFCFIGLATSSLYF), 155 to 175 (LAISLPITCYGLSALLGAQIL), 188 to 208 (LEVVFSFFAWLYLVVGIASFV), and 249 to 269 (FVSFVKDPSAWILLVSLILNI). A glycan (N-linked (GlcNAc...) asparagine) is linked at Asn-278. 5 helical membrane-spanning segments follow: residues 295–312 (VSIMAASSTGARLLLGVL), 325–345 (LLVVVIVVGVAGQMSETSAIL), 347–367 (GVSYGGMFTIYPTIVASIWGI), 373–393 (TWGSFMVAPALGSVIFSMFYG), and 410–430 (TAGAMIVSCIFVLLAWKIWYA).

The protein belongs to the major facilitator superfamily.

It localises to the vacuole membrane. Functionally, probable transporter. This chain is Probable transporter MCH1 (MCH1), found in Candida albicans (strain SC5314 / ATCC MYA-2876) (Yeast).